A 264-amino-acid chain; its full sequence is Apolipoprotein A-I (264 aa).

The N-terminal stretch at 1 to 18 (MKAVVLTVAVLFLTGSQA) is a signal peptide. 2 tandem repeats follow at residues 67–88 (LKLL…EQIG) and 89–110 (PVSQ…QEMN). A 10 X approximate tandem repeats region spans residues 67–264 (LKLLDNWDSL…DEATKKLNTQ (198 aa)). A Methionine sulfoxide modification is found at M109. One copy of the 3; half-length repeat lies at 111-121 (KDLEEVKRKVQ). A run of 3 repeats spans residues 122–143 (PYLD…QQVE), 144–165 (PLSK…EKLS), and 166–187 (PLGQ…THLA). Residues 188 to 207 (PYSDELRQRLAARLEALKEG) form a 7; truncated repeat. Repeat unit 8 spans residues 208 to 229 (SSFAEYQAKATEHLSALGEKAK). The stretch at 230 to 240 (PALEDLRQGLL) is one 9; half-length repeat. The stretch at 241-264 (PVLESLKLSFWSAVDEATKKLNTQ) is repeat 10.

This sequence belongs to the apolipoprotein A1/A4/E family. In terms of assembly, homodimer. Interacts with APOA1BP and CLU. Component of a sperm activating protein complex (SPAP), consisting of APOA1, an immunoglobulin heavy chain, an immunoglobulin light chain and albumin. Interacts with NDRG1. Interacts with SCGB3A2. Interacts with NAXE and YJEFN3. Glycosylated. Post-translationally, palmitoylated. In terms of processing, phosphorylation sites are present in the extracellular medium.

The protein localises to the secreted. Its function is as follows. Participates in the reverse transport of cholesterol from tissues to the liver for excretion by promoting cholesterol efflux from tissues and by acting as a cofactor for the lecithin cholesterol acyltransferase (LCAT). As part of the SPAP complex, activates spermatozoa motility. The protein is Apolipoprotein A-I (APOA1) of Ictidomys tridecemlineatus (Thirteen-lined ground squirrel).